The following is a 521-amino-acid chain: MSSIKSKTIIEPSENDIEKGEVDFVSSSISNFEEAYEEGPSLKREFKSRHVNMISVAGAIGTGLVIGSGSALLKGGPGSLFIAYLMTGINLYVVLISLGEMAAFSSDDKGFSGFSSRYVDKALGFATGWNYFFKYAIVYPTNLTAVGIVIHYWRPDLNVGIWVAVFLVVILAINLLHVKYFGEVEFWLSAVKILVLVTLIITCIVITSGGTPVHHKIGFHYWRDPGAFAPYLVEGSTGRFLGFWACLVQSCFAYVGSEVVGIAFGEAPNPEKTIRKSSFQSLFRIATFYVIGVFVLGLCVPYDSDILSSNASKGNAAASPFVVAIKLAQIKVMPDVINACLLVFIISSANSDIYIGSRTLYALAKEGYAPKILMLQTKQGIPWVGCLVTSSFGLLAFMNTKSSSATIFGYFSSAVTVFGTINWINILLSYICYHRATIVQQIPTERIPFRSWGQPYIAYASLIFTGLITFFNGYNAFIHGFKYRSFITSYIGIAAYVIMILGWKFTFKAKRVTSSTVDFRK.

Transmembrane regions (helical) follow at residues 53-73, 78-98, 158-178, 186-206, 282-302, 336-356, 380-400, 407-427, and 487-507; these read MISV…SALL, GSLF…LISL, NVGI…LLHV, FWLS…CIVI, LFRI…CVPY, VINA…IYIG, GIPW…FMNT, IFGY…INIL, and ITSY…KFTF.

The protein belongs to the amino acid-polyamine-organocation (APC) superfamily.

The protein resides in the membrane. This is an uncharacterized protein from Schizosaccharomyces pombe (strain 972 / ATCC 24843) (Fission yeast).